The primary structure comprises 438 residues: Putative formin-like protein 21a (438 aa).

The interval 1–74 (MSPVEISGAD…RVLPRPPPPP (74 aa)) is disordered. Pro residues predominate over residues 22-61 (PLPPPPPPPPPPMRRRAPLPPPPPPPMRRRAPLPPPPPPA). The 315-residue stretch at 124 to 438 (FPCPSKKKSS…SYGYFDQPWI (315 aa)) folds into the FH2 domain.

This sequence belongs to the formin-like family. Class-II subfamily.

This is Putative formin-like protein 21a (FH21A) from Arabidopsis thaliana (Mouse-ear cress).